We begin with the raw amino-acid sequence, 114 residues long: UPF0757 protein YmgG (114 aa).

The protein belongs to the UPF0757 family.

The chain is UPF0757 protein YmgG from Escherichia fergusonii (strain ATCC 35469 / DSM 13698 / CCUG 18766 / IAM 14443 / JCM 21226 / LMG 7866 / NBRC 102419 / NCTC 12128 / CDC 0568-73).